Here is a 176-residue protein sequence, read N- to C-terminus: 3-hydroxydecanoyl-[acyl-carrier-protein] dehydratase (176 aa).

H71 is a catalytic residue.

It belongs to the thioester dehydratase family. FabA subfamily. In terms of assembly, homodimer.

It is found in the cytoplasm. The enzyme catalyses a (3R)-hydroxyacyl-[ACP] = a (2E)-enoyl-[ACP] + H2O. It catalyses the reaction (3R)-hydroxydecanoyl-[ACP] = (2E)-decenoyl-[ACP] + H2O. It carries out the reaction (2E)-decenoyl-[ACP] = (3Z)-decenoyl-[ACP]. Its pathway is lipid metabolism; fatty acid biosynthesis. Functionally, necessary for the introduction of cis unsaturation into fatty acids. Catalyzes the dehydration of (3R)-3-hydroxydecanoyl-ACP to E-(2)-decenoyl-ACP and then its isomerization to Z-(3)-decenoyl-ACP. Can catalyze the dehydratase reaction for beta-hydroxyacyl-ACPs with saturated chain lengths up to 16:0, being most active on intermediate chain length. The polypeptide is 3-hydroxydecanoyl-[acyl-carrier-protein] dehydratase (Rhodopseudomonas palustris (strain HaA2)).